The sequence spans 288 residues: T-cell-interacting, activating receptor on myeloid cells protein 1 (288 aa).

The N-terminal stretch at 1 to 16 (MISRLLSLLCLRLCVG) is a signal peptide. Residues 17–258 (QTDIPENGSP…EGYTVDNLIR (242 aa)) are Extracellular-facing. Ig-like C2-type domains lie at 27-113 (PKPS…HPSN) and 124-217 (PQPS…LEIS). 2 disulfide bridges follow: cysteine 49–cysteine 97 and cysteine 146–cysteine 196. N-linked (GlcNAc...) asparagine glycans are attached at residues asparagine 74 and asparagine 185. Residues 259–279 (VGVAAAILLIVGGFLVEAWHS) traverse the membrane as a helical segment. Topologically, residues 280–288 (ERLSPNKPW) are cytoplasmic.

In terms of assembly, interacts with Fc receptor gamma chain FCER1G. Post-translationally, N-glycosylated. In terms of tissue distribution, expressed in lung, uterus, lymph nodes, spleen, thymus and bone marrow. Expressed in bone marrow CD11b(+)Gr-1(+) granulocyte precursors and mature neutrophils.

The protein localises to the cell membrane. May act as receptor. Negatively regulates TCR-mediated CD4(+) T cell proliferation and activation, possibly by binding an unknown ligand on the T cell surface. Enhances Toll-like receptor-mediated production of pro-inflammatory cytokines by macrophages and neutrophils. In Mus musculus (Mouse), this protein is T-cell-interacting, activating receptor on myeloid cells protein 1 (Tarm1).